The chain runs to 195 residues: HTH-type transcriptional regulator BetI (195 aa).

One can recognise an HTH tetR-type domain in the interval 8-68 (EIRRAQLIDA…ATMRHVLRDL (61 aa)). Positions 31 to 50 (TLASVAQRANISTGIVSHYF) form a DNA-binding region, H-T-H motif.

The protein operates within amine and polyamine biosynthesis; betaine biosynthesis via choline pathway [regulation]. Repressor involved in the biosynthesis of the osmoprotectant glycine betaine. It represses transcription of the choline transporter BetT and the genes of BetAB involved in the synthesis of glycine betaine. The protein is HTH-type transcriptional regulator BetI of Burkholderia thailandensis (strain ATCC 700388 / DSM 13276 / CCUG 48851 / CIP 106301 / E264).